Here is a 293-residue protein sequence, read N- to C-terminus: Germ cell-specific gene 1-like protein 2 (293 aa).

The Cytoplasmic segment spans residues 1–8; sequence MDRAKQQQ. A helical transmembrane segment spans residues 9-29; that stretch reads ALLLLPVCLALTFSLTAVVSS. Topologically, residues 30-120 are extracellular; the sequence is HWCEGTRRVV…RSVVPAEEQG (91 aa). 2 N-linked (GlcNAc...) asparagine glycosylation sites follow: asparagine 59 and asparagine 67. A helical membrane pass occupies residues 121–141; it reads VLWLSIGGEVLDIVLILTSAI. Residues 142–160 are Cytoplasmic-facing; sequence LLGSRVSCRSPGFHWLRVD. A helical membrane pass occupies residues 161–181; it reads ALVAIFMVLAGLLGMVAHMMY. The Extracellular segment spans residues 182 to 204; the sequence is TTIFQITVNLGPEDWKPQTWDYG. The chain crosses the membrane as a helical span at residues 205–225; the sequence is WSYCLAWGSFALCLAVSVSAM. Over 226 to 293 the chain is Cytoplasmic; that stretch reads SRFTAARLEF…PGAPGKVSIC (68 aa).

This sequence belongs to the GSG1 family.

It is found in the membrane. This chain is Germ cell-specific gene 1-like protein 2, found in Homo sapiens (Human).